Reading from the N-terminus, the 218-residue chain is 5-oxoprolinase subunit B (218 aa).

This sequence belongs to the PxpB family. In terms of assembly, forms a complex composed of PxpA, PxpB and PxpC.

The catalysed reaction is 5-oxo-L-proline + ATP + 2 H2O = L-glutamate + ADP + phosphate + H(+). Functionally, catalyzes the cleavage of 5-oxoproline to form L-glutamate coupled to the hydrolysis of ATP to ADP and inorganic phosphate. The chain is 5-oxoprolinase subunit B from Escherichia coli O157:H7.